Here is a 299-residue protein sequence, read N- to C-terminus: B3 domain-containing transcription factor NGA2 (299 aa).

The tract at residues 1-21 is disordered; that stretch reads MNQEDKEKPIEEASSSMEREH. The TF-B3 DNA-binding region spans 23–129; the sequence is FDKVVTPSDV…KLYIDWRRRP (107 aa). A disordered region spans residues 226-249; sequence GGGGSVNSTEEESSSSGGSIPRGR.

Its subcellular location is the nucleus. Regulates lateral organ growth. Functionally redundant with NGA1, NGA3 and NGA4. The chain is B3 domain-containing transcription factor NGA2 (NGA2) from Arabidopsis thaliana (Mouse-ear cress).